The chain runs to 452 residues: Pup--protein ligase (452 aa).

Glu-9 contacts Mg(2+). An ATP-binding site is contributed by Arg-53. Tyr-55 contacts Mg(2+). Asp-57 acts as the Proton acceptor in catalysis. A Mg(2+)-binding site is contributed by Glu-63. ATP is bound by residues Thr-66 and Trp-419.

It belongs to the Pup ligase/Pup deamidase family. Pup-conjugating enzyme subfamily.

The enzyme catalyses ATP + [prokaryotic ubiquitin-like protein]-L-glutamate + [protein]-L-lysine = ADP + phosphate + N(6)-([prokaryotic ubiquitin-like protein]-gamma-L-glutamyl)-[protein]-L-lysine.. Its pathway is protein degradation; proteasomal Pup-dependent pathway. The protein operates within protein modification; protein pupylation. In terms of biological role, catalyzes the covalent attachment of the prokaryotic ubiquitin-like protein modifier Pup to the proteasomal substrate proteins, thereby targeting them for proteasomal degradation. This tagging system is termed pupylation. The ligation reaction involves the side-chain carboxylate of the C-terminal glutamate of Pup and the side-chain amino group of a substrate lysine. The sequence is that of Pup--protein ligase from Rhodococcus jostii (strain RHA1).